We begin with the raw amino-acid sequence, 394 residues long: Elongation factor Tu-A (394 aa).

In terms of domain architecture, tr-type G spans 10–204 (KPHVNVGTIG…HLDTYIPEPQ (195 aa)). Residues 19–26 (GHVDHGKT) form a G1 region. Residue 19-26 (GHVDHGKT) coordinates GTP. Mg(2+) is bound at residue threonine 26. The G2 stretch occupies residues 60–64 (GITIN). Residues 81–84 (DCPG) form a G3 region. GTP-binding positions include 81–85 (DCPGH) and 136–139 (NKCD). A G4 region spans residues 136–139 (NKCD). The G5 stretch occupies residues 174-176 (SAL).

This sequence belongs to the TRAFAC class translation factor GTPase superfamily. Classic translation factor GTPase family. EF-Tu/EF-1A subfamily. In terms of assembly, monomer.

The protein resides in the cytoplasm. It catalyses the reaction GTP + H2O = GDP + phosphate + H(+). Its function is as follows. GTP hydrolase that promotes the GTP-dependent binding of aminoacyl-tRNA to the A-site of ribosomes during protein biosynthesis. In Pasteurella multocida (strain Pm70), this protein is Elongation factor Tu-A.